Reading from the N-terminus, the 99-residue chain is uncharacterized protein (99 aa).

This is an uncharacterized protein from Saccharolobus islandicus (Sulfolobus islandicus).